A 345-amino-acid chain; its full sequence is Phenylalanine--tRNA ligase alpha subunit (345 aa).

A Mg(2+)-binding site is contributed by glutamate 253.

The protein belongs to the class-II aminoacyl-tRNA synthetase family. Phe-tRNA synthetase alpha subunit type 1 subfamily. As to quaternary structure, tetramer of two alpha and two beta subunits. Mg(2+) is required as a cofactor.

The protein resides in the cytoplasm. The catalysed reaction is tRNA(Phe) + L-phenylalanine + ATP = L-phenylalanyl-tRNA(Phe) + AMP + diphosphate + H(+). This is Phenylalanine--tRNA ligase alpha subunit from Nitratidesulfovibrio vulgaris (strain DP4) (Desulfovibrio vulgaris).